The chain runs to 65 residues: Small, acid-soluble spore protein C3 (65 aa).

The protein belongs to the alpha/beta-type SASP family.

SASP are bound to spore DNA. They are double-stranded DNA-binding proteins that cause DNA to change to an a-like conformation. They protect the DNA backbone from chemical and enzymatic cleavage and are thus involved in dormant spore's high resistance to UV light. This chain is Small, acid-soluble spore protein C3 (SASP-C3), found in Priestia megaterium (Bacillus megaterium).